We begin with the raw amino-acid sequence, 159 residues long: Major allergen Mal d 1 (159 aa).

The protein belongs to the BetVI family.

The polypeptide is Major allergen Mal d 1 (Malus domestica (Apple)).